The primary structure comprises 27 residues: Toxin Bcg III 21.00 (27 aa).

It is found in the secreted. Its subcellular location is the nematocyst. Its function is as follows. Possible voltage-gated potassium channel (Kv) blocker. This chain is Toxin Bcg III 21.00, found in Bunodosoma cangicum (Sea anemone).